Consider the following 557-residue polypeptide: Acid-sensing ion channel 1B (557 aa).

The Cytoplasmic portion of the chain corresponds to 1-98; sequence MVRITCTISF…SIRQGLWALV (98 aa). Residues 36-45 show a composition bias toward basic and acidic residues; the sequence is KDGEQGKYQE. A disordered region spans residues 36–57; that stretch reads KDGEQGKYQEEGDDPDAYDGPE. The segment covering 46–57 has biased composition (acidic residues); sequence EGDDPDAYDGPE. The helical transmembrane segment at 99 to 115 threads the bilayer; the sequence is FLLAISMFLLQVVDRVI. Residues 116 to 460 are Extracellular-facing; the sequence is YYLQYDYVTL…ETIEQKKAYE (345 aa). Residues N133 and N194 are each glycosylated (N-linked (GlcNAc...) asparagine). 7 disulfides stabilise this stretch: C142-C229, C207-C214, C325-C400, C343-C396, C347-C394, C356-C378, and C358-C370. N-linked (GlcNAc...) asparagine glycans are attached at residues N401 and N428. The chain crosses the membrane as a discontinuously helical span at residues 461 to 491; it reads LAGLLGDIGGQMGLFIGASILTILELFDYLY. The GAS motif; ion selectivity filter motif lies at 477 to 479; it reads GAS. Topologically, residues 492–557 are cytoplasmic; sequence EVIKFKLCRC…GQGNFEDFTC (66 aa).

The protein belongs to the amiloride-sensitive sodium channel (TC 1.A.6) family. ASIC1 subfamily. In terms of assembly, homotrimer. Heterotrimer; with other ASIC proteins producing channel with different properties. Expressed in central nervous system.

It localises to the cell membrane. The protein localises to the postsynaptic cell membrane. Its subcellular location is the cell projection. It is found in the dendrite. It carries out the reaction Na(+)(in) = Na(+)(out). The catalysed reaction is K(+)(in) = K(+)(out). It catalyses the reaction Li(+)(in) = Li(+)(out). The enzyme catalyses Ca(2+)(in) = Ca(2+)(out). With respect to regulation, inhibited by the diuretic drug amiloride. In terms of biological role, forms voltage-independent, pH-gated trimeric sodium channels that act as postsynaptic excitatory receptors in the nervous system, playing a crucial role in regulating synaptic plasticity, learning, and memory. Upon extracellular pH drop this channel elicits transient, fast activating, and completely desensitizing inward currents. Displays high selectivity for sodium ions but can also permit the permeation of other cations. In Danio rerio (Zebrafish), this protein is Acid-sensing ion channel 1B (asic1b).